Here is a 475-residue protein sequence, read N- to C-terminus: Glycogen synthase (475 aa).

Lys-15 serves as a coordination point for ADP-alpha-D-glucose.

It belongs to the glycosyltransferase 1 family. Bacterial/plant glycogen synthase subfamily.

The catalysed reaction is [(1-&gt;4)-alpha-D-glucosyl](n) + ADP-alpha-D-glucose = [(1-&gt;4)-alpha-D-glucosyl](n+1) + ADP + H(+). The protein operates within glycan biosynthesis; glycogen biosynthesis. Its function is as follows. Synthesizes alpha-1,4-glucan chains using ADP-glucose. This Alkaliphilus metalliredigens (strain QYMF) protein is Glycogen synthase.